The chain runs to 425 residues: O-methyltransferase AMT9 (425 aa).

Residues 257 to 258 (GG), Asp280, 306 to 307 (DF), Arg322, and Arg323 each bind S-adenosyl-L-methionine. His326 acts as the Proton acceptor in catalysis.

The protein belongs to the class I-like SAM-binding methyltransferase superfamily. Cation-independent O-methyltransferase family.

It participates in mycotoxin biosynthesis. In terms of biological role, O-methyltransferase; part of the gene clusters that mediate the biosynthesis of AM-toxins, host-selective toxins (HSTs) causing Alternaria blotch on apple, a worldwide distributed disease. AM-toxins are cyclic depsipeptides containing the 3 residues 2-hydroxy-isovaleric acid (2-HIV), dehydroalanine, L-alanine which are common for all 3 AM-toxins I to III. The fourth precursor is L-alpha-amino-methoxyphenyl-valeric acid (L-Amv) for AM-toxin I, L-alpha-amino-phenyl-valeric acid (L-Apv) for AM-toxin II, and L-alpha-amino-hydroxyphenyl-valeric acid (L-Ahv) for AM-toxin III. AM-toxins have two target sites for affecting susceptible apple cells; they cause invagination of the plasma membrane and electrolyte loss and chloroplast disorganization. The non-ribosomal peptide synthetase AMT1 contains 4 catalytic modules and is responsible for activation of each residue in AM-toxin. The aldo-keto reductase AMT2 catalyzes the conversion of 2-keto-isovaleric acid (2-KIV) to 2-hydroxy-isovaleric acid (2-HIV), one of the precursor residues incorporated by AMT1 during AM-toxin biosynthesis, by reduction of its ketone to an alcohol. The cytochrome P450 monooxygenase AMT3 and the thioesterase AMT4 are also important for AM-toxin production, but their exact function within the AM-toxin biosynthesis are not known yet. Up to 21 proteins (including AMT1 to AMT4) are predicted to be involved in AM-toxin biosynthesis since their expression ishighly up-regulated in AM-toxin-producing cultures. The protein is O-methyltransferase AMT9 of Alternaria alternata (Alternaria rot fungus).